We begin with the raw amino-acid sequence, 315 residues long: Transcriptional regulator protein Pur-beta (315 aa).

Residues 1–39 are disordered; sequence MADGDSGSERGGGGPGSFQPAPRGGGGPGGEQETQELAS. Position 2 is an N-acetylalanine (A2). Residues S6 and S8 each carry the phosphoserine modification. Residue R23 is modified to Omega-N-methylarginine. The tract at residues 28 to 254 is DNA-binding; it reads PGGEQETQEL…GVFLRVSEVK (227 aa). A Phosphothreonine modification is found at T34. At S104 the chain carries Phosphoserine. Omega-N-methylarginine is present on R155. The disordered stretch occupies residues 200 to 220; it reads DDELAGGPGGGAGGPGGGLYG. Gly residues predominate over residues 205-219; it reads GGPGGGAGGPGGGLY. K270 carries the post-translational modification N6-acetyllysine. Positions 288 to 298 are enriched in basic and acidic residues; that stretch reads RQRDKLYERRG. Residues 288-315 form a disordered region; the sequence is RQRDKLYERRGGGSGGGDESEGEEVDED. The residue at position 297 (R297) is an Omega-N-methylarginine. Phosphoserine is present on residues S301 and S307. The span at 305–315 shows a compositional bias: acidic residues; sequence DESEGEEVDED.

This sequence belongs to the PUR DNA-binding protein family. Homodimer, heterodimer with PURA and heterotrimer with PURA and YBX1/Y-box protein 1. Interacts with MYOCD and SRF. In terms of tissue distribution, expressed in muscle cells and in the liver.

The protein localises to the nucleus. Transcriptional regulator which can act as an activator or a repressor. Represses the transcription of ACTA2 in fibroblasts and smooth muscle cells via its ability to interact with the purine-rich strand of a MCAT- containing element in the 5' flanking region of the gene. Represses the transcription of MYOCD, capable of repressing all isoforms of MYOCD but the magnitude of the repressive effects is most notable for the SMC- specific isoforms. Promotes hepatic glucose production by activating the transcription of ADCY6, leading to cAMP accumulation, increased PKA activity, CREB activation, and increased transcription of PCK1 and G6PC genes. Has capacity to bind repeated elements in single-stranded DNA such as the purine-rich single strand of the PUR element located upstream of the MYC gene. Participates in transcriptional and translational regulation of alpha-MHC expression in cardiac myocytes by binding to the purine-rich negative regulatory (PNR) element. Modulates constitutive liver galectin-3 gene transcription by binding to its promoter. May play a role in the dendritic transport of a subset of mRNAs. The polypeptide is Transcriptional regulator protein Pur-beta (Purb) (Rattus norvegicus (Rat)).